A 238-amino-acid chain; its full sequence is MTPHINAKKDDIAKVVLMPGDPLRAKWIAEQFMEKPRLVNEVRGMLAFTGQYKGKTITIMGHGMGIPSIGIYSYELMKFYEVNTIIRIGSCGALQGSLNLQDLIIAAKAWSESIYANDMGVEVPADKILMASPQLVELAKKTANQLQLAFHEGLVFCEDAFHQIRKDVLKLAQEKHALAVEMEAHALYANAMLLNKQALTMLTVSDSLVTHAALPAEQRQATFKNMAILSLEMASQLV.

A purine D-ribonucleoside is bound at residue H4. Residues G20, R24, R43, and 87–90 each bind phosphate; that span reads RIGS. A purine D-ribonucleoside-binding positions include 181 to 183 and 205 to 206; these read EME and SD. The active-site Proton donor is D206.

Belongs to the PNP/UDP phosphorylase family. Homohexamer; trimer of homodimers.

It catalyses the reaction a purine D-ribonucleoside + phosphate = a purine nucleobase + alpha-D-ribose 1-phosphate. The enzyme catalyses a purine 2'-deoxy-D-ribonucleoside + phosphate = a purine nucleobase + 2-deoxy-alpha-D-ribose 1-phosphate. In terms of biological role, catalyzes the reversible phosphorolytic breakdown of the N-glycosidic bond in the beta-(deoxy)ribonucleoside molecules, with the formation of the corresponding free purine bases and pentose-1-phosphate. The polypeptide is Purine nucleoside phosphorylase DeoD-type (Mycoplasma pneumoniae (strain ATCC 29342 / M129 / Subtype 1) (Mycoplasmoides pneumoniae)).